The sequence spans 461 residues: Bifunctional protein HldE (461 aa).

The interval 1–311 (MKKILVVGDL…EEIALILNQT (311 aa)) is ribokinase. 191–194 (NRAE) is a binding site for ATP. The active site involves Asp260. The tract at residues 332–461 (FTNGCFDLLH…IEKIKRTHND (130 aa)) is cytidylyltransferase.

The protein in the N-terminal section; belongs to the carbohydrate kinase PfkB family. It in the C-terminal section; belongs to the cytidylyltransferase family. As to quaternary structure, homodimer.

The catalysed reaction is D-glycero-beta-D-manno-heptose 7-phosphate + ATP = D-glycero-beta-D-manno-heptose 1,7-bisphosphate + ADP + H(+). It carries out the reaction D-glycero-beta-D-manno-heptose 1-phosphate + ATP + H(+) = ADP-D-glycero-beta-D-manno-heptose + diphosphate. It participates in nucleotide-sugar biosynthesis; ADP-L-glycero-beta-D-manno-heptose biosynthesis; ADP-L-glycero-beta-D-manno-heptose from D-glycero-beta-D-manno-heptose 7-phosphate: step 1/4. The protein operates within nucleotide-sugar biosynthesis; ADP-L-glycero-beta-D-manno-heptose biosynthesis; ADP-L-glycero-beta-D-manno-heptose from D-glycero-beta-D-manno-heptose 7-phosphate: step 3/4. Functionally, catalyzes the phosphorylation of D-glycero-D-manno-heptose 7-phosphate at the C-1 position to selectively form D-glycero-beta-D-manno-heptose-1,7-bisphosphate. Its function is as follows. Catalyzes the ADP transfer from ATP to D-glycero-beta-D-manno-heptose 1-phosphate, yielding ADP-D-glycero-beta-D-manno-heptose. This Helicobacter pylori (strain P12) protein is Bifunctional protein HldE.